The primary structure comprises 904 residues: Leucine--tRNA ligase (904 aa).

Positions 49-59 (PYPSGDLHIGH) match the 'HIGH' region motif. Residues 663-667 (TMSKS) carry the 'KMSKS' region motif. Lysine 666 is an ATP binding site.

It belongs to the class-I aminoacyl-tRNA synthetase family.

Its subcellular location is the cytoplasm. The catalysed reaction is tRNA(Leu) + L-leucine + ATP = L-leucyl-tRNA(Leu) + AMP + diphosphate. This chain is Leucine--tRNA ligase, found in Roseiflexus castenholzii (strain DSM 13941 / HLO8).